The sequence spans 162 residues: Phosphopantetheine adenylyltransferase (162 aa).

Position 9 (threonine 9) interacts with substrate. ATP-binding positions include 9-10 (TF) and histidine 17. The substrate site is built by lysine 41, leucine 76, and arginine 90. Residues 91–93 (GLR), glutamate 101, and 126–132 (HQAIASR) contribute to the ATP site.

It belongs to the bacterial CoaD family. Homohexamer. Mg(2+) is required as a cofactor.

It is found in the cytoplasm. The catalysed reaction is (R)-4'-phosphopantetheine + ATP + H(+) = 3'-dephospho-CoA + diphosphate. Its pathway is cofactor biosynthesis; coenzyme A biosynthesis; CoA from (R)-pantothenate: step 4/5. Its function is as follows. Reversibly transfers an adenylyl group from ATP to 4'-phosphopantetheine, yielding dephospho-CoA (dPCoA) and pyrophosphate. This is Phosphopantetheine adenylyltransferase from Caulobacter sp. (strain K31).